Reading from the N-terminus, the 196-residue chain is Phosphoheptose isomerase (196 aa).

The 161-residue stretch at 36–196 (MAQALQAEGK…LIDQHLFGGA (161 aa)) folds into the SIS domain. 51–53 (NGG) provides a ligand contact to substrate. 2 residues coordinate Zn(2+): His60 and Glu64. Substrate contacts are provided by residues Glu64, 93 to 94 (ND), 119 to 121 (STS), Ser124, and Gln174. Zn(2+)-binding residues include Gln174 and His182.

Belongs to the SIS family. GmhA subfamily. As to quaternary structure, homotetramer. The cofactor is Zn(2+).

The protein localises to the cytoplasm. The enzyme catalyses 2 D-sedoheptulose 7-phosphate = D-glycero-alpha-D-manno-heptose 7-phosphate + D-glycero-beta-D-manno-heptose 7-phosphate. The protein operates within carbohydrate biosynthesis; D-glycero-D-manno-heptose 7-phosphate biosynthesis; D-glycero-alpha-D-manno-heptose 7-phosphate and D-glycero-beta-D-manno-heptose 7-phosphate from sedoheptulose 7-phosphate: step 1/1. Its function is as follows. Catalyzes the isomerization of sedoheptulose 7-phosphate in D-glycero-D-manno-heptose 7-phosphate. The chain is Phosphoheptose isomerase from Alkalilimnicola ehrlichii (strain ATCC BAA-1101 / DSM 17681 / MLHE-1).